A 228-amino-acid chain; its full sequence is Chromatin remodeling protein SHL (228 aa).

The BAH domain maps to 21 to 137; that stretch reads KSIQEGDAVL…STTGAFDPDR (117 aa). The PHD-type zinc finger occupies 139 to 190; the sequence is TVFCKCEMPYNPDDLMVQCEECSEWFHPSCIGTTIEEAKKPDNFYCEECSPQ. A compositionally biased stretch (polar residues) spans 191–203; sequence QQNLHNSNSTSNN. Positions 191–228 are disordered; that stretch reads QQNLHNSNSTSNNRDAKVNGKRSLEVTKSKNKHTKRPG. A compositionally biased stretch (basic and acidic residues) spans 204 to 218; that stretch reads RDAKVNGKRSLEVTK. The Nuclear localization signal motif lies at 210–217; the sequence is GKRSLEVT. Over residues 219-228 the composition is skewed to basic residues; it reads SKNKHTKRPG.

It belongs to the SHL1/EBS protein family. In terms of assembly, recognizes di- and trimethylated histone H3 at lysine 4. Interacts with HDA6. Interacts with DEK3. In terms of tissue distribution, expressed ubiquitously. Mostly expressed in roots, stems, leaves and flowers, and, to a lower extent, in siliques.

It is found in the nucleus. Functionally, chromatin remodeling factor that binds to methylated histone (e.g. H3K4me2/3) to prevent their acetylation (e.g. H3K9K14Ac), likely by recruiting histone deacetylase (HDAC) complexes, and thus regulate the transcription of target genes. Required during development and for fertility, probably by modulating developmental gene expression. Promotes development speed, but at fitness cost. Involved in the chromatin-mediated repression of floral initiation and controls genes regulating flowering. Negatively regulates the expression of the floral integrator SOC1, by preventing high levels of H3 acetylation, thus maintaining an inactive chromatin conformation. This Arabidopsis thaliana (Mouse-ear cress) protein is Chromatin remodeling protein SHL.